The primary structure comprises 308 residues: Oxygen-dependent coproporphyrinogen-III oxidase (308 aa).

Ser100 provides a ligand contact to substrate. Positions 104 and 114 each coordinate a divalent metal cation. Residue His114 is the Proton donor of the active site. Residue Asn116–Arg118 participates in substrate binding. Residues His153 and His183 each coordinate a divalent metal cation. Residues Tyr248 to Arg283 are important for dimerization. Gly266–Arg268 lines the substrate pocket.

This sequence belongs to the aerobic coproporphyrinogen-III oxidase family. As to quaternary structure, homodimer. A divalent metal cation is required as a cofactor.

Its subcellular location is the cytoplasm. The catalysed reaction is coproporphyrinogen III + O2 + 2 H(+) = protoporphyrinogen IX + 2 CO2 + 2 H2O. Its pathway is porphyrin-containing compound metabolism; protoporphyrin-IX biosynthesis; protoporphyrinogen-IX from coproporphyrinogen-III (O2 route): step 1/1. Involved in the heme biosynthesis. Catalyzes the aerobic oxidative decarboxylation of propionate groups of rings A and B of coproporphyrinogen-III to yield the vinyl groups in protoporphyrinogen-IX. The chain is Oxygen-dependent coproporphyrinogen-III oxidase from Francisella tularensis subsp. novicida (strain U112).